Here is a 332-residue protein sequence, read N- to C-terminus: Serine, glycine, tyrosine and glutamine-rich protein (332 aa).

The N-terminal stretch at 1 to 17 (MMKTVLLLVVLVGVAYC) is a signal peptide. A disordered region spans residues 39–81 (SSSSSSSSSSGGGGSSGGGASGGGGGGGSSGGGGASGGGGGGS). The span at 48-81 (SGGGGSSGGGASGGGGGGGSSGGGGASGGGGGGS) shows a compositional bias: gly residues.

In terms of tissue distribution, prismatic layer of shell (at protein level). Expressed primarily in the mantle with highest level in the mantle edge and lower level in the mantle pallium.

The protein localises to the secreted. The polypeptide is Serine, glycine, tyrosine and glutamine-rich protein (Margaritifera margaritifera (Freshwater pearl mussel)).